Consider the following 184-residue polypeptide: Coordinator of PRMT5 and differentiation stimulator (184 aa).

Met-1 bears the N-acetylmethionine mark. Positions 1–14 (MDLQAAGAQAQGAA) are enriched in low complexity. The tract at residues 1-136 (MDLQAAGAQA…PYDADDIQES (136 aa)) is disordered. Positions 42 to 56 (SSQERETEKAMDRLA) are enriched in basic and acidic residues. Phosphoserine is present on residues Ser-66 and Ser-75. The span at 78–89 (EGFAMDEEDSDG) shows a compositional bias: acidic residues.

As to quaternary structure, interacts with PRMT5. Interacts with histone H4; specifically interacts with the N-terminus of histone H4 but not with histone H3. Interacts with CBFB. Found in a complex with PRMT5, RUNX1 and CBFB.

It localises to the nucleus. Its function is as follows. Histone-binding protein required for histone H4 methyltransferase activity of PRMT5. Specifically required for histone H4 'Arg-3' methylation mediated by PRMT5, but not histone H3 'Arg-8' methylation, suggesting that it modulates the substrate specificity of PRMT5. Specifically interacts with the N-terminus of histone H4 but not with histone H3, suggesting that it acts by promoting the association between histone H4 and PRMT5. Involved in CCNE1 promoter repression. Plays a role in muscle cell differentiation by modulating the recruitment of PRMT5 to the promoter of genes involved in the coordination between cell cycle exit and muscle differentiation. The chain is Coordinator of PRMT5 and differentiation stimulator (COPRS) from Homo sapiens (Human).